A 467-amino-acid chain; its full sequence is Asparagine--tRNA ligase (467 aa).

This sequence belongs to the class-II aminoacyl-tRNA synthetase family. Homodimer.

The protein resides in the cytoplasm. The catalysed reaction is tRNA(Asn) + L-asparagine + ATP = L-asparaginyl-tRNA(Asn) + AMP + diphosphate + H(+). This is Asparagine--tRNA ligase from Mannheimia succiniciproducens (strain KCTC 0769BP / MBEL55E).